A 524-amino-acid polypeptide reads, in one-letter code: GMP synthase [glutamine-hydrolyzing] (524 aa).

The region spanning 12–201 is the Glutamine amidotransferase type-1 domain; it reads TILVLDFGSQ…AVDICKASQS (190 aa). The active-site Nucleophile is Cys-88. Catalysis depends on residues His-175 and Glu-177. One can recognise a GMPS ATP-PPase domain in the interval 202 to 399; that stretch reads WNMENFIDTE…LGISHELVWR (198 aa). 230 to 236 is a binding site for ATP; it reads SGGVDST. XMP is bound by residues Arg-303, Asp-461, Lys-516, and Glu-522.

Homodimer. It depends on Mg(2+) as a cofactor.

Its subcellular location is the cytoplasm. It localises to the cytosol. The catalysed reaction is XMP + L-glutamine + ATP + H2O = GMP + L-glutamate + AMP + diphosphate + 2 H(+). It participates in purine metabolism; GMP biosynthesis; GMP from XMP (L-Gln route): step 1/1. Functionally, catalyzes the conversion of xanthine monophosphate (XMP) to GMP in the presence of glutamine and ATP through an adenyl-XMP intermediate. This is GMP synthase [glutamine-hydrolyzing] (GUA1) from Kluyveromyces lactis (strain ATCC 8585 / CBS 2359 / DSM 70799 / NBRC 1267 / NRRL Y-1140 / WM37) (Yeast).